Here is a 1342-residue protein sequence, read N- to C-terminus: DNA-directed RNA polymerase subunit beta (1342 aa).

It belongs to the RNA polymerase beta chain family. In terms of assembly, the RNAP catalytic core consists of 2 alpha, 1 beta, 1 beta' and 1 omega subunit. When a sigma factor is associated with the core the holoenzyme is formed, which can initiate transcription.

The catalysed reaction is RNA(n) + a ribonucleoside 5'-triphosphate = RNA(n+1) + diphosphate. In terms of biological role, DNA-dependent RNA polymerase catalyzes the transcription of DNA into RNA using the four ribonucleoside triphosphates as substrates. This is DNA-directed RNA polymerase subunit beta from Actinobacillus pleuropneumoniae serotype 3 (strain JL03).